Consider the following 204-residue polypeptide: E2 ubiquitin-conjugating enzyme PEX4 (204 aa).

The 195-residue stretch at 2-196 (SAEKRLLQEY…IEYYVGRYSI (195 aa)) folds into the UBC core domain. The Glycyl thioester intermediate role is filled by C133.

This sequence belongs to the ubiquitin-conjugating enzyme family.

The protein localises to the peroxisome membrane. It catalyses the reaction S-ubiquitinyl-[E1 ubiquitin-activating enzyme]-L-cysteine + [E2 ubiquitin-conjugating enzyme]-L-cysteine = [E1 ubiquitin-activating enzyme]-L-cysteine + S-ubiquitinyl-[E2 ubiquitin-conjugating enzyme]-L-cysteine.. It functions in the pathway protein modification; protein ubiquitination. In terms of biological role, E2 ubiquitin-conjugating enzyme involved in peroxisome biosynthesis. Acts late in peroxisomal matrix protein import, after matrix protein translocation. Required for both monoubiquitination and polyubiquitination of coreceptor PEX20. polyubiquitination of PEX20 at conserved lysine 'Lys-19' near the N-terminus leads to its and proteasomal degradation, whereas a monoubiquitination at the conserved cysteine 'Cys-8' is essential for its recycling. This chain is E2 ubiquitin-conjugating enzyme PEX4, found in Komagataella phaffii (strain GS115 / ATCC 20864) (Yeast).